The primary structure comprises 289 residues: Pantothenate synthetase (289 aa).

28–35 contacts ATP; that stretch reads MGCLHEGH. Catalysis depends on histidine 35, which acts as the Proton donor. Residue glutamine 59 participates in (R)-pantoate binding. Glutamine 59 provides a ligand contact to beta-alanine. Residue 147–150 participates in ATP binding; sequence GLKD. Glutamine 153 is a (R)-pantoate binding site. Residues valine 176 and 184–187 each bind ATP; that span reads MSSR.

It belongs to the pantothenate synthetase family. As to quaternary structure, homodimer.

Its subcellular location is the cytoplasm. The enzyme catalyses (R)-pantoate + beta-alanine + ATP = (R)-pantothenate + AMP + diphosphate + H(+). The protein operates within cofactor biosynthesis; (R)-pantothenate biosynthesis; (R)-pantothenate from (R)-pantoate and beta-alanine: step 1/1. Its function is as follows. Catalyzes the condensation of pantoate with beta-alanine in an ATP-dependent reaction via a pantoyl-adenylate intermediate. The chain is Pantothenate synthetase from Magnetococcus marinus (strain ATCC BAA-1437 / JCM 17883 / MC-1).